The sequence spans 547 residues: Chaperonin GroEL (547 aa).

Residues 30–33 (TLGP), Lys-51, 87–91 (DGTTT), Gly-415, and Asp-496 each bind ATP. Positions 527-547 (SDKEEPMPMRGGMGGMGGMDF) are disordered. Residues 537-547 (GGMGGMGGMDF) show a composition bias toward gly residues.

Belongs to the chaperonin (HSP60) family. In terms of assembly, forms a cylinder of 14 subunits composed of two heptameric rings stacked back-to-back. Interacts with the co-chaperonin GroES.

It localises to the cytoplasm. It carries out the reaction ATP + H2O + a folded polypeptide = ADP + phosphate + an unfolded polypeptide.. Functionally, together with its co-chaperonin GroES, plays an essential role in assisting protein folding. The GroEL-GroES system forms a nano-cage that allows encapsulation of the non-native substrate proteins and provides a physical environment optimized to promote and accelerate protein folding. In Rickettsia massiliae (strain Mtu5), this protein is Chaperonin GroEL.